A 254-amino-acid polypeptide reads, in one-letter code: tRNA (guanine-N(1)-)-methyltransferase (254 aa).

Residues Gly-113 and 133 to 138 (LGDFVL) each bind S-adenosyl-L-methionine.

The protein belongs to the RNA methyltransferase TrmD family. Homodimer.

It localises to the cytoplasm. The enzyme catalyses guanosine(37) in tRNA + S-adenosyl-L-methionine = N(1)-methylguanosine(37) in tRNA + S-adenosyl-L-homocysteine + H(+). In terms of biological role, specifically methylates guanosine-37 in various tRNAs. The polypeptide is tRNA (guanine-N(1)-)-methyltransferase (Herpetosiphon aurantiacus (strain ATCC 23779 / DSM 785 / 114-95)).